The primary structure comprises 95 residues: Pancreatic polypeptide prohormone (95 aa).

Residues 1–29 (MAAARLCLSLLLLSTCVALLLQPLLGAQG) form the signal peptide. Tyrosine amide is present on Y65. Residues 89-95 (ELSPLDL) constitute a propeptide that is removed on maturation.

This sequence belongs to the NPY family.

It localises to the secreted. Its function is as follows. Hormone secreted by pancreatic cells that acts as a regulator of pancreatic and gastrointestinal functions probably by signaling through the G protein-coupled receptor NPY4R2. The chain is Pancreatic polypeptide prohormone from Homo sapiens (Human).